Reading from the N-terminus, the 99-residue chain is Probable non-specific lipid-transfer protein AKCS9 (99 aa).

Residues 1–33 form the signal peptide; that stretch reads MTMKMKMKMSVVCAVVVVALFLIDVGPVAEAVT. 4 disulfides stabilise this stretch: cysteine 34-cysteine 68, cysteine 42-cysteine 56, cysteine 57-cysteine 92, and cysteine 66-cysteine 99.

It belongs to the plant LTP family. Expressed in most tissues except nodules.

Potential lipid transfer protein. The sequence is that of Probable non-specific lipid-transfer protein AKCS9 from Vigna unguiculata (Cowpea).